The chain runs to 178 residues: Probable host range protein 2 (178 aa).

Belongs to the poxviridae C7 protein family.

In terms of biological role, plays a role for multiplication of the virus in different cell types. This Yaba-like disease virus (YLDV) protein is Probable host range protein 2.